We begin with the raw amino-acid sequence, 243 residues long: DNA repair protein RecO (243 aa).

It belongs to the RecO family.

In terms of biological role, involved in DNA repair and RecF pathway recombination. The chain is DNA repair protein RecO from Phenylobacterium zucineum (strain HLK1).